The following is a 165-amino-acid chain: Lipoprotein signal peptidase (165 aa).

A run of 3 helical transmembrane segments spans residues 9 to 29, 69 to 89, and 98 to 118; these read FLAI…VLLY, KYFL…FLFL, and IRFS…DILF. Catalysis depends on residues aspartate 124 and aspartate 142. The helical transmembrane segment at 133–153 threads the bilayer; it reads WYFPTFNFADIFISLGTFIFV.

It belongs to the peptidase A8 family.

The protein localises to the cell inner membrane. It catalyses the reaction Release of signal peptides from bacterial membrane prolipoproteins. Hydrolyzes -Xaa-Yaa-Zaa-|-(S,diacylglyceryl)Cys-, in which Xaa is hydrophobic (preferably Leu), and Yaa (Ala or Ser) and Zaa (Gly or Ala) have small, neutral side chains.. Its pathway is protein modification; lipoprotein biosynthesis (signal peptide cleavage). This protein specifically catalyzes the removal of signal peptides from prolipoproteins. The protein is Lipoprotein signal peptidase of Chlamydia caviae (strain ATCC VR-813 / DSM 19441 / 03DC25 / GPIC) (Chlamydophila caviae).